Here is a 367-residue protein sequence, read N- to C-terminus: Inhibin alpha chain (367 aa).

An N-terminal signal peptide occupies residues 1–20; that stretch reads MVPPLPLLLLLLLVPQGGHG. The propeptide occupies 21 to 63; the sequence is CQGSELDREIVLAKVRALFLDALGPPAVTGEGGDPGVRRLPRR. Residues 64–233 constitute a propeptide, inhibin alpha N-terminal region; it reads HALGGFARRG…PPSGGERTRR (170 aa). 2 N-linked (GlcNAc...) asparagine glycosylation sites follow: Asn-147 and Asn-269. Cystine bridges form between Cys-263–Cys-329, Cys-292–Cys-364, and Cys-296–Cys-366.

It belongs to the TGF-beta family. As to quaternary structure, dimeric, linked by one or more disulfide bonds. Activin B is a dimer of alpha and beta-B. Inhibin A is a dimer of alpha and beta-A. Inhibin B is a dimer of alpha and beta-B. Interacts with TGFBR3L; this interaction regulates female fertility. Proteolytic processing yields a number of bioactive forms, consisting either solely of the mature alpha chain, of the most N-terminal propeptide linked through a disulfide bond to the mature alpha chain, or of the entire proprotein.

It is found in the secreted. Inhibins and activins inhibit and activate, respectively, the secretion of follitropin by the pituitary gland. Inhibins/activins are involved in regulating a number of diverse functions such as hypothalamic and pituitary hormone secretion, gonadal hormone secretion, germ cell development and maturation, erythroid differentiation, insulin secretion, nerve cell survival, embryonic axial development or bone growth, depending on their subunit composition. Inhibins appear to oppose the functions of activins. Functionally, inhibin A is a dimer of alpha/INHA and beta-A/INHBA that functions as a feedback regulator in the hypothalamic-pituitary-gonadal (HPG) axis. Inhibits the secretion of FSH from the anterior pituitary gland by acting on pituitary gonadotrope cells. Antagonizes activin A by binding to the proteoglycan, betaglycan, and forming a stable complex with and, thereby, sequestering type II activin receptors while excluding type I receptor. Its function is as follows. Inhibin B is a dimer of alpha and beta-B that plays a crucial role in the regulation of the reproductive system by inhibiting the secretion of follicle-stimulating hormone (FSH) from the anterior pituitary gland. Thereby, maintains reproductive homeostasis in both males and females. Acts as a more potent suppressor of FSH release than inhibin A. Functions as competitive receptor antagonist binding activin type II receptors with high affinity in the presence of the TGF-beta type III coreceptor/TGFBR3L. This Equus caballus (Horse) protein is Inhibin alpha chain (INHA).